A 227-amino-acid chain; its full sequence is AN1-type zinc finger protein 3 (227 aa).

Residues 12–44 form an A20-type zinc finger; that stretch reads PSLPPRCPCGFWGSSKTMNLCSKCFADFQKKQP. Cysteine 18, cysteine 20, cysteine 32, and cysteine 35 together coordinate Zn(2+). 2 disordered regions span residues 41–100 and 113–148; these read KKQP…EECG and PTKR…ETSR. The segment covering 49-59 has biased composition (polar residues); sequence APSTSNSQSDL. The span at 66 to 77 shows a compositional bias: low complexity; sequence SDNNNTSITTPT. Polar residues-rich tracts occupy residues 78 to 94 and 113 to 127; these read LSPS…VTSP and PTKR…SENE. Residues 135–148 show a composition bias toward basic and acidic residues; sequence RLLENTERSEETSR. An AN1-type zinc finger spans residues 151–200; the sequence is QKSRRRCFQCQTKLELVQQELGSCRCGYVFCMLHRLPEQHDCTFDHMGRG. Zn(2+) is bound by residues cysteine 157, cysteine 160, cysteine 174, cysteine 176, cysteine 181, histidine 184, histidine 190, and cysteine 192.

The protein is AN1-type zinc finger protein 3 (ZFAND3) of Homo sapiens (Human).